A 109-amino-acid polypeptide reads, in one-letter code: Small ribosomal subunit protein bS6 (109 aa).

It belongs to the bacterial ribosomal protein bS6 family.

Functionally, binds together with bS18 to 16S ribosomal RNA. The protein is Small ribosomal subunit protein bS6 of Anaplasma phagocytophilum (strain HZ).